A 132-amino-acid chain; its full sequence is Fatty acid-binding protein, intestinal (132 aa).

Position 2 is an N-acetylalanine (alanine 2). Hexadecanoate contacts are provided by tryptophan 83 and arginine 107. Tetradecanoate-binding residues include tryptophan 83 and arginine 107.

This sequence belongs to the calycin superfamily. Fatty-acid binding protein (FABP) family. Expressed in the small intestine and at much lower levels in the large intestine. Highest expression levels in the jejunum.

The protein resides in the cytoplasm. Its function is as follows. FABPs are thought to play a role in the intracellular transport of long-chain fatty acids and their acyl-CoA esters. FABP2 is probably involved in triglyceride-rich lipoprotein synthesis. Binds saturated long-chain fatty acids with a high affinity, but binds with a lower affinity to unsaturated long-chain fatty acids. FABP2 may also help maintain energy homeostasis by functioning as a lipid sensor. The chain is Fatty acid-binding protein, intestinal (FABP2) from Homo sapiens (Human).